The primary structure comprises 210 residues: Small ribosomal subunit protein uS7 (210 aa).

It belongs to the universal ribosomal protein uS7 family. Component of the small ribosomal subunit. Part of the small subunit (SSU) processome, composed of more than 70 proteins and the RNA chaperone small nucleolar RNA (snoRNA) U3.

It localises to the cytoplasm. The protein localises to the nucleus. Its subcellular location is the nucleolus. Its function is as follows. Component of the small ribosomal subunit. The ribosome is a large ribonucleoprotein complex responsible for the synthesis of proteins in the cell. Part of the small subunit (SSU) processome, first precursor of the small eukaryotic ribosomal subunit. During the assembly of the SSU processome in the nucleolus, many ribosome biogenesis factors, an RNA chaperone and ribosomal proteins associate with the nascent pre-rRNA and work in concert to generate RNA folding, modifications, rearrangements and cleavage as well as targeted degradation of pre-ribosomal RNA by the RNA exosome. The polypeptide is Small ribosomal subunit protein uS7 (rps-5) (Caenorhabditis elegans).